We begin with the raw amino-acid sequence, 532 residues long: Probable NAD kinase 1 (532 aa).

Residues Met-1–Glu-26 show a composition bias toward basic and acidic residues. Positions Met-1–Ile-32 are disordered.

It belongs to the NAD kinase family.

It carries out the reaction NAD(+) + ATP = ADP + NADP(+) + H(+). This is Probable NAD kinase 1 from Oryza sativa subsp. japonica (Rice).